The chain runs to 58 residues: KappaPI-actitoxin-Avd3b (58 aa).

Positions Cys5–Cys55 constitute a BPTI/Kunitz inhibitor domain. 3 disulfide bridges follow: Cys5–Cys55, Cys14–Cys38, and Cys30–Cys51.

It belongs to the venom Kunitz-type family. Sea anemone type 2 potassium channel toxin subfamily.

The protein resides in the secreted. It localises to the nematocyst. Dual-function toxin that inhibits both the serine protease trypsin (Kd&lt;30 nM) and voltage-gated potassium channels Kv1.2/KCNA2 (IC(50)=2800 nM). This is KappaPI-actitoxin-Avd3b from Anemonia sulcata (Mediterranean snakelocks sea anemone).